The following is a 329-amino-acid chain: Homeobox protein ceh-40 (329 aa).

The PBC domain occupies 3-186 (EASKSIMDLL…VIQLKKRYLD (184 aa)). The tract at residues 10 to 90 (DLLSEVVKIT…EGVAGPDDSL (81 aa)) is PBC-A. Residues 93-186 (IQEAAGTDQY…VIQLKKRYLD (94 aa)) form a PBC-B region. Positions 187 to 249 (ARRKRRNFSK…NKRIRYKKTM (63 aa)) form a DNA-binding region, homeobox; TALE-type. Residues 248-275 (TMAKNEDERRENRKPEDRPPPGAPGAPY) are disordered. Basic and acidic residues predominate over residues 250-266 (AKNEDERRENRKPEDRP).

It belongs to the TALE/PBX homeobox family. Expressed in head dopaminergic neurons.

Its subcellular location is the nucleus. Its function is as follows. Plays a role in regulating gene expression in dopaminergic neurons, acting redundantly with homeobox protein ceh-20 in head neurons. May activate dopamine pathway genes in concert with ETS domain-containing protein ast-1, and homeobox proteins ceh-43 and ceh-20. This Caenorhabditis elegans protein is Homeobox protein ceh-40 (ceh-40).